We begin with the raw amino-acid sequence, 581 residues long: Membrane protein insertase YidC (581 aa).

Residues 7–27 traverse the membrane as a helical segment; that stretch reads ILIVALAVVSYLMVLQWNEDY. A disordered region spans residues 41 to 62; that stretch reads AATPALPDTPADTASTGGDDIP. 5 consecutive transmembrane segments (helical) span residues 365–385, 388–408, 458–478, 489–509, and 536–556; these read TVDYGFLWFLAQPIFWLLEVI, LLGNWGWSIIVLTIIIKLIFF, LGGCLPILVQMPVFLALYWVL, WMFWITDLSIKDPFFILPIIM, and PIIFTFFFLWFPAGLVLYWVV.

It belongs to the OXA1/ALB3/YidC family. Type 1 subfamily. In terms of assembly, interacts with the Sec translocase complex via SecD. Specifically interacts with transmembrane segments of nascent integral membrane proteins during membrane integration.

The protein resides in the cell inner membrane. Functionally, required for the insertion and/or proper folding and/or complex formation of integral membrane proteins into the membrane. Involved in integration of membrane proteins that insert both dependently and independently of the Sec translocase complex, as well as at least some lipoproteins. Aids folding of multispanning membrane proteins. The sequence is that of Membrane protein insertase YidC from Ectopseudomonas mendocina (strain ymp) (Pseudomonas mendocina).